The following is an 823-amino-acid chain: MKLFGFGSRRGQTAQGSIDHVYTGSGYRIRDSELQKIHRAAVKGDAAEVERCLARRSGDLDALDKQHRTALHLACTSGHVQVVTLLVNRKCQIDVCDKENRTPLIQAVHCQEEACAVILLEHGANPNLKDIYGNTALHYAVYSESTSLAEKLLSHGAHIEALDKDNNTPLLFAIICKKEKMVEFLLKKKASSHAVDRLRRSALMLAVYYDSPGIVNILLKQNIDVFAQDMCGRDAEDYAISHHLTKIQQQILEHKKKILKKEKSDVGSSDESAVSIFHELRVDSLPASDDKDLNVATKQCVPEKVSEPLPGSSHEKGNRIVNGQGEGPPAKHPSLKPSTEVEDPAVKGAVQRKNVQTLRAEQALPVASEEEQERHERSEKKQPQVKEGNNTNKSEKIQLSENICDSTSSAAAGRLTQQRKIGKTYPQQFPKKLKEEHDRCTLKQENEEKTNVNMLYKKNREELERKEKQYKKEVEAKQLEPTVQSLEMKSKTARNTPNWDFHNHEEMKGLMDENCILKADIAILRQEICTMKNDNLEKENKYLKDIKIVKETNAALEKYIKLNEEMITETAFRYQQELNDLKAENTRLNAELLKEKESKKRLEADIESYQSRLAAAISKHSESVKTERNLKLALERTRDVSVQVEMSSAISKVKAENEFLTEQLSETQIKFNALKDKFRKTRDSLRKKSLALETVQNDLSQTQQQTQEMKEMYQNAEAKVNNSTGKWNCVEERICHLQRENAWLVQQLDDVHQKEDHKEIVTNIQRGFIESGKKDLVLEEKSKKLMNECDHLKESLFQYEREKTEGVVSIKEDKYFQTSRKTI.

ANK repeat units follow at residues 66–95, 99–128, 132–161, 165–194, and 198–227; these read QHRT…QIDV, ENRT…NPNL, YGNT…HIEA, DNNT…SSHA, and LRRS…DVFA. Disordered stretches follow at residues 301–343 and 355–402; these read VPEK…EVED and VQTL…LSEN. The segment covering 372 to 384 has biased composition (basic and acidic residues); it reads QERHERSEKKQPQ. Coiled coils occupy residues 431–480, 565–724, and 776–805; these read KKLK…KQLE, EMIT…NNST, and LVLE…EKTE.

The chain is Ankyrin repeat domain-containing protein 20A1 (ANKRD20A1) from Homo sapiens (Human).